Reading from the N-terminus, the 291-residue chain is MAGTKEIRTKIKSVQNTRKITKAMEMVAASKMRKAQERMRNARPYAEKVRNIAAHLASANPEFKHPFMVARDVKRAGMIVVTTDKGLCGGLNTNVLRAVTNELKDLQGQGVNVQATAIGTKGMQFLGRIGAKVVSHVVQLGDTPHLEKLIGAIKVQLDAYTNGEVDAVYLAYTKFINTMKQEPMVEQLLPLAADKLSQTEDEKRAYSWDYIYEPDAQTVVEELLVRYVEALVYQAVAENMASEQSARMVAMKAASDNAKNVIGELQLVYNKTRQAAITKELSEIVSGAAAV.

The protein belongs to the ATPase gamma chain family. In terms of assembly, F-type ATPases have 2 components, CF(1) - the catalytic core - and CF(0) - the membrane proton channel. CF(1) has five subunits: alpha(3), beta(3), gamma(1), delta(1), epsilon(1). CF(0) has three main subunits: a, b and c.

Its subcellular location is the cell inner membrane. Functionally, produces ATP from ADP in the presence of a proton gradient across the membrane. The gamma chain is believed to be important in regulating ATPase activity and the flow of protons through the CF(0) complex. In Cupriavidus metallidurans (strain ATCC 43123 / DSM 2839 / NBRC 102507 / CH34) (Ralstonia metallidurans), this protein is ATP synthase gamma chain.